The primary structure comprises 456 residues: F-box/FBD/LRR-repeat protein At3g52680 (456 aa).

The F-box domain maps to 20–73; it reads KDRISELPDGLLLKILSSLPTNIVVATSVLSKQWRSLWKLVPNLEFDSDDYESE. 7 LRR repeats span residues 74–100, 102–127, 152–179, 180–205, 225–252, 270–295, and 318–344; these read HYTFSEIVCKSFLSHKAPVLESFRLKF, NFNPVDIGLWVGIAFSRHLRELVLDF, TLKLVLCILVDIPSPVLMKSLRTLHLEF, VRYKDESSVRNLLSGCPGLEELRLYR, TIHDNNDGPEFWGYVINAPFLKYLLIEE, IAEVTSITIEKFLGSFTSVSRLLLNL, and TREAEWWNLLTLMLENSPKLQVLKLTD. The FBD domain maps to 358–409; it reads KWNEPKDVPECLLSQLETFVWRRFDWGREEEKEIATYILKNGRRLKKATFST.

In Arabidopsis thaliana (Mouse-ear cress), this protein is F-box/FBD/LRR-repeat protein At3g52680.